We begin with the raw amino-acid sequence, 2615 residues long: MDGYSSLSSSGNSIAPPRPTNNSVGGGSNSNNYNQREITTPLRGMVPNLGDGSSSQTLLFKNILLLQDVEFFCSILDNFCRSSSTQKITDLINSLIVILDDSFLELLRLFIKQTIDQAKQCSTDESNPLNYQSFYNLINRMAAIYLKSQLGGLMEKTMISQVLNFTPMIQEQIVILANKEANKNNNNVLSANSTPNVTALKTSPAIGSPRIIMGSNYNNSSNNNNIDSIDLNNNSPNMLKNNSPSTFINGSVPQINGGGGSYNLTPISSPTIGSSTPTIITSSSSTTTPTNNNNSNNNTPIISQTIIQNINVEHMKDQISQFSISIINTIFRSIEKFPPTVFQLFEMLYLDIHQVFSPDFCFELMKKIFFTKLICPILANLKSPPNMANGKFFTKTYIEISKVVLDIAFDRDQSRRGSVTTQEQIMHFIKGMIFRNTHSISMTAALNPTLNNQVIPPSIPLPSKEEACNNFINNIRSESSELEESFKRAKDLNTCISFARADRQIYLFSIFKEMLINFKISFNLLNNNQNNNQNINQNNNNNNNQNCNSNTSSPIISSRSGFYTLRNSSTNSSPTNPPLTARGNGSISIGNNNNNNNNNNNNNNNNNNNNNNNNSGGGGGGLNNSSNLLINPWVSSYQNSNISNSDQVQSTRVVQSFSKKWTSDELRPTYLGKSPKKRSWVLDKKNIKTQIINLHIFLDNYSVCRIVTVPMNITFQALANRIHTDSEFSDIQLNKEEYEMVIRYPEESITVLNDEGNQEVICEPELPLWMFDIDTESIIIFRPIKRRSPSSSFNIFLKFIFPSNSSFNSSSSSLPSTPHQKINPMILYINPQSTPQSIIDKFSKLIQPSLLDTAHLGFYLRDIDDESSSPPSIKIPNNNSFAHNKISTMDIIECGPRLSYEFSITVNGTIQNILIDFDNQIDNVANIFYNIYQHLIELSPRSLSSSSSSSSDINNNNNNNTNNNIELTSSGRILTSNGSKHNSNNSNNSSGSSNISEQNLKRSSGIIDSIINGHSNNNSNNYALALLSNSNFLPMFLPGQSKLQDYCFNVGDELILTEKTFVQLVEVLATPRRPPIALSSSLSQSNAFNSNVYNSNAYNSNVYNSNPYLSNYNGLSSQSLNSMNVDGAGGVGGFNGEQNQQQNKVIARVRVIWAGSNSSVDRLQSFINTSQNVNTTYSGSTMALNDVLSNPNQLLSTPLSRPLLSTVIAQDNTYICTSKNDYCMNNQVKLCIVGEESQEKLSFYNSLRKNYSQNGLLSSGGGRGGGFFGSNFIPSSTSNVNEVSSIDGVLHTSELVVGSAEIDQITLKTFYISGNEQYQVVHPLFISPQSLFIITYNPMNINSTMINYWLEIIQTKAQGSTVYLVGLSNTSIDEKKFVSFKSEYHRLFRFNNINSYSNISLKNSKQIKQLVQRLQNNAMMKQYHYKIPLSYSILKSQCQESVKEAYARNKMPLSSIPLIKNIARIFSIEPRDSEAAIKYLYEIGEVLYYRYEANDQLLNELVFLDSMWMSKLISAVLALKTQNGMTVVDQITQAWASLFPHCKTSSLLFLLEKFELVYISAEDSSVIIPQLFGGERPMVMRDLWSPTAHANNEYLRIYEFQFLPKGFFSRLSVRVLQHYDPLCIWQNGMVLQPAGQLWGGAAKSFDSQCLIEYDSVNFILKVSIRDDNKQQQLLKSIVDLVSSFILWYFPGRLSNVRVACTHCTNQHIENPTMYTLDYLENQASLGQTNVICKAQLGGIIHETLSPRTTKIDIYSLAFEVTFNSNKFSVIPYETLKFGPQLGSGSYANVYRGIWNGSEVAIKVLNFDDGHANTTEKYREFRNEAHITGELRHANTVSLMGVSLSPFCLVTELLQYGDLAKFIRNTAETFSWGTVLKLAIDVAKGMNFLHSCKPMIVHRDLKSANILLGGSSMDNLVAKVGDFGLSIKPIGKEVKGRKVWNWRWLAPECMGDGQYTEKIDIYSYAIVLWEIITRDLPFEEYVDQLKWNSIIEDKIMKGLRPTIPNECPPDMKQLITDCWSGDPKKRPSFNSILERLSTMQKTFNLNERLEFCKQLPPINEDQINQQQQQPPPQSQAAQQQQPSTSTPPLSQHQQKLSISNLQLNNLLNNHNSNGSNSSIQSSLSHNNNNLNNNINNNNNNNNNNNNNSSGGSSGVSHSGSSGNNFVIPIITAIANGGIGSGGNQHQQNGSSTPHSNSQSNSGSSSVYESGDGSLSSAGSFKILRYEMVLPVAFTSTIHSLYPVQNNKNEVFVWCGMGDGSVCVINSATRQIVSTSRIADSSRILGFSLIRKCTPSSSSVTLTSRSSLNLSSLASGSTPSPYSSGGSGGSLGSSYQPICPTIEEDSHIWAFYNEGILCFEAKSFKLLKTIKTNFITSLVDEGESVWSNCKEKTSCIKVISKSKLKTKKLMNVKTLDAQITTILIHHSSVGAVGASRVWLGTDRGMIFILEYPSMAPIAHHESHGGALIHTIKRMDRFVITCSERVICIFDESGIIKKRLDGLASRVLSLLILDTYIIGACYDSTILVWDSKQNFRMVQSLKKKHTDAISSLAFALSPQGKPQLWVGGWDKKITTYSFFEDLESSLSIALQTPPPSSYPTLATPRLGLVNVSKSKLFG.

The span at 1–13 (MDGYSSLSSSGNS) shows a compositional bias: low complexity. Disordered stretches follow at residues 1–35 (MDGY…NYNQ), 275–297 (STPT…NSNN), 533–623 (QNIN…GGLN), and 946–998 (SSSS…ISEQ). Composition is skewed to low complexity over residues 533-560 (QNIN…SSRS), 567-614 (NSST…NNNN), and 946-996 (SSSS…SNIS). The COR domain maps to 1441 to 1631 (SVKEAYARNK…LCIWQNGMVL (191 aa)). The 268-residue stretch at 1775–2042 (LKFGPQLGSG…ERLSTMQKTF (268 aa)) folds into the Protein kinase domain. ATP is bound by residues 1781 to 1789 (LGSGSYANV) and Lys-1802. The Proton acceptor role is filled by Asp-1899. Disordered stretches follow at residues 2061–2158 (QINQ…SHSG) and 2176–2209 (GIGS…YESG). 2 stretches are compositionally biased toward low complexity: residues 2073–2158 (SQAA…SHSG) and 2182–2209 (NQHQ…YESG). WD repeat units follow at residues 2491-2527 (GIIK…LVWD) and 2533-2574 (RMVQ…TTYS).

Belongs to the protein kinase superfamily. TKL Ser/Thr protein kinase family. ROCO subfamily.

It carries out the reaction L-seryl-[protein] + ATP = O-phospho-L-seryl-[protein] + ADP + H(+). The enzyme catalyses L-threonyl-[protein] + ATP = O-phospho-L-threonyl-[protein] + ADP + H(+). This chain is Probable serine/threonine-protein kinase roco7 (roco7), found in Dictyostelium discoideum (Social amoeba).